Here is a 310-residue protein sequence, read N- to C-terminus: Protoheme IX farnesyltransferase 2 (310 aa).

Transmembrane regions (helical) follow at residues proline 25–glycine 45, leucine 49–isoleucine 69, arginine 87–glycine 107, alanine 120–leucine 139, serine 145–cysteine 165, alanine 176–phenylalanine 196, leucine 220–glycine 240, threonine 242–leucine 262, and glutamine 277–phenylalanine 297.

The protein belongs to the UbiA prenyltransferase family. Protoheme IX farnesyltransferase subfamily.

The protein resides in the cell inner membrane. It carries out the reaction heme b + (2E,6E)-farnesyl diphosphate + H2O = Fe(II)-heme o + diphosphate. The protein operates within porphyrin-containing compound metabolism; heme O biosynthesis; heme O from protoheme: step 1/1. Converts heme B (protoheme IX) to heme O by substitution of the vinyl group on carbon 2 of heme B porphyrin ring with a hydroxyethyl farnesyl side group. This is Protoheme IX farnesyltransferase 2 from Shewanella baltica (strain OS185).